The chain runs to 156 residues: Cyclic pyranopterin monophosphate synthase (156 aa).

Residues 73–75 (LCH) and 110–111 (ME) contribute to the substrate site. Residue aspartate 125 is part of the active site.

It belongs to the MoaC family. In terms of assembly, homohexamer; trimer of dimers.

The catalysed reaction is (8S)-3',8-cyclo-7,8-dihydroguanosine 5'-triphosphate = cyclic pyranopterin phosphate + diphosphate. The protein operates within cofactor biosynthesis; molybdopterin biosynthesis. Its function is as follows. Catalyzes the conversion of (8S)-3',8-cyclo-7,8-dihydroguanosine 5'-triphosphate to cyclic pyranopterin monophosphate (cPMP). This is Cyclic pyranopterin monophosphate synthase from Pseudomonas putida (strain GB-1).